The primary structure comprises 232 residues: 2,3-bisphosphoglycerate-dependent phosphoglycerate mutase (232 aa).

Residues 10–17 (RHGESQWN), 23–24 (TG), arginine 62, 89–92 (ERHY), lysine 100, 116–117 (RR), and 186–187 (GN) each bind substrate. Histidine 11 acts as the Tele-phosphohistidine intermediate in catalysis. Glutamate 89 serves as the catalytic Proton donor/acceptor.

This sequence belongs to the phosphoglycerate mutase family. BPG-dependent PGAM subfamily. As to quaternary structure, homodimer.

It carries out the reaction (2R)-2-phosphoglycerate = (2R)-3-phosphoglycerate. It participates in carbohydrate degradation; glycolysis; pyruvate from D-glyceraldehyde 3-phosphate: step 3/5. Catalyzes the interconversion of 2-phosphoglycerate and 3-phosphoglycerate. The sequence is that of 2,3-bisphosphoglycerate-dependent phosphoglycerate mutase from Blochmanniella pennsylvanica (strain BPEN).